The sequence spans 212 residues: Adenylate kinase (212 aa).

Gly-10 to Thr-15 contacts ATP. An NMP region spans residues Ser-30–Val-59. Residues Thr-31, Arg-36, Glu-57 to Val-59, Gly-86 to Arg-89, and Gln-93 each bind AMP. The tract at residues Gly-127–Asp-159 is LID. Residues Arg-128 and Thr-137–Phe-138 each bind ATP. Arg-156 and Arg-167 together coordinate AMP. Residue Gln-195 coordinates ATP.

The protein belongs to the adenylate kinase family. Monomer.

It is found in the cytoplasm. The enzyme catalyses AMP + ATP = 2 ADP. The protein operates within purine metabolism; AMP biosynthesis via salvage pathway; AMP from ADP: step 1/1. Its function is as follows. Catalyzes the reversible transfer of the terminal phosphate group between ATP and AMP. Plays an important role in cellular energy homeostasis and in adenine nucleotide metabolism. This Streptococcus pyogenes serotype M5 (strain Manfredo) protein is Adenylate kinase.